A 162-amino-acid chain; its full sequence is UPF0460 protein y4vQ (162 aa).

Belongs to the UPF0460 family.

The sequence is that of UPF0460 protein y4vQ from Sinorhizobium fredii (strain NBRC 101917 / NGR234).